The primary structure comprises 525 residues: GMP synthase [glutamine-hydrolyzing] (525 aa).

One can recognise a Glutamine amidotransferase type-1 domain in the interval 9-207 (RILILDFGSQ…VRDICQCEAL (199 aa)). Cys86 acts as the Nucleophile in catalysis. Catalysis depends on residues His181 and Glu183. One can recognise a GMPS ATP-PPase domain in the interval 208 to 400 (WTPAKIIDDA…LGLPYDMLYR (193 aa)). Position 235–241 (235–241 (SGGVDSS)) interacts with ATP.

As to quaternary structure, homodimer.

The catalysed reaction is XMP + L-glutamine + ATP + H2O = GMP + L-glutamate + AMP + diphosphate + 2 H(+). It functions in the pathway purine metabolism; GMP biosynthesis; GMP from XMP (L-Gln route): step 1/1. Functionally, catalyzes the synthesis of GMP from XMP. This chain is GMP synthase [glutamine-hydrolyzing], found in Shigella flexneri serotype 5b (strain 8401).